The chain runs to 324 residues: tRNA-modifying protein YgfZ (324 aa).

Trp-184 provides a ligand contact to folate.

It belongs to the tRNA-modifying YgfZ family.

It localises to the cytoplasm. Folate-binding protein involved in regulating the level of ATP-DnaA and in the modification of some tRNAs. It is probably a key factor in regulatory networks that act via tRNA modification, such as initiation of chromosomal replication. The chain is tRNA-modifying protein YgfZ from Vibrio vulnificus (strain CMCP6).